The following is a 128-amino-acid chain: Azurin (128 aa).

Positions 1–128 constitute a Plastocyanin-like domain; sequence AECSVDIQGN…AMMKGTLTLK (128 aa). Residues His46, Cys112, His117, and Met121 each contribute to the Cu cation site.

Its subcellular location is the periplasm. Its function is as follows. Transfers electrons from cytochrome c551 to cytochrome oxidase. In Pseudomonas denitrificans, this protein is Azurin.